Consider the following 321-residue polypeptide: Methionyl-tRNA formyltransferase (321 aa).

Residue 112–115 coordinates (6S)-5,6,7,8-tetrahydrofolate; that stretch reads GLLP.

Belongs to the Fmt family.

It carries out the reaction L-methionyl-tRNA(fMet) + (6R)-10-formyltetrahydrofolate = N-formyl-L-methionyl-tRNA(fMet) + (6S)-5,6,7,8-tetrahydrofolate + H(+). Attaches a formyl group to the free amino group of methionyl-tRNA(fMet). The formyl group appears to play a dual role in the initiator identity of N-formylmethionyl-tRNA by promoting its recognition by IF2 and preventing the misappropriation of this tRNA by the elongation apparatus. The polypeptide is Methionyl-tRNA formyltransferase (Chlamydia caviae (strain ATCC VR-813 / DSM 19441 / 03DC25 / GPIC) (Chlamydophila caviae)).